A 66-amino-acid polypeptide reads, in one-letter code: Small ribosomal subunit protein eS30 (66 aa).

The disordered stretch occupies residues 1–35 (MGKVHGGLNRAGKVRNATPKKDKEEKRKPKVGRAK).

It belongs to the eukaryotic ribosomal protein eS30 family.

The polypeptide is Small ribosomal subunit protein eS30 (rps30-1) (Dictyostelium discoideum (Social amoeba)).